A 408-amino-acid chain; its full sequence is MASRLPILIIGAGISGLTTARLLTNSGIPNIVFEASSPDRRQGFAISLREWGYTILLSALGDLPLRSLTRGVAPDREIGGSGWIDQAVWDNGTAKKLFVPDANSSTKELIVRANRNALRRWIADCGEEELDVRYGHRLKRVEGSLGDVRVEFENGAFYRGLMVVAADGVNSTVRSQVLAHVQPETVPAVLYHGEFQLPRADFDRLFRPHTGESNILAGVGDGFNTPFAVCNMTKTHVHMDWSYSRPVRGSGEDDPLYRPNLASEEAKRIPTALVEELASRDLAEPWSLFLNGEAIQHHRVFHWAVRCVSVTREDMQRAVGRGVAFVGDSWHAMPIFGGEGGNHALADGIELAGAIAAGATGDLGTAIGNYYDQAWKRSQDAVRRSKQRFYTLHRPMAEWRELSKKKPL.

The N-terminal stretch at 1 to 20 is a signal peptide; the sequence is MASRLPILIIGAGISGLTTA. 2 residues coordinate FAD: glutamate 34 and alanine 45. Asparagine 91 and asparagine 103 each carry an N-linked (GlcNAc...) asparagine glycan. Arginine 119 contacts FAD. Asparagine 170 and asparagine 231 each carry an N-linked (GlcNAc...) asparagine glycan. FAD-binding residues include aspartate 328 and glycine 341.

It belongs to the paxM FAD-dependent monooxygenase family. The cofactor is FAD.

The protein operates within secondary metabolite biosynthesis. In terms of biological role, FAD-dependent monooxygenase; part of the gene cluster that mediates the biosynthesis of neosartoricin, a prenylated anthracenone that exhibits T-cell antiproliferative activity, suggestive of a physiological role as an immunosuppressive agent. The non-reducing polyketide synthase nscA probably synthesizes and cyclizes the decaketide backbone. The hydrolase nscB then mediates the product release through hydrolysis followed by spontaneous decarboxylation. The prenyltransferase nscD catalyzes the addition of the dimethylallyl group to the aromatic C5. The FAD-dependent monooxygenase nscC is then responsible for the stereospecific hydroxylation at C2. There is no gene encoding O-acetyltransferase in the nsc gene cluster; thus, the last step of 2-O-acetylation leading to neosartoricin may be catalyzed by an unidentified O-acetyltransferase. This Aspergillus fumigatus (strain ATCC MYA-4609 / CBS 101355 / FGSC A1100 / Af293) (Neosartorya fumigata) protein is FAD-dependent monooxygenase nscC.